We begin with the raw amino-acid sequence, 132 residues long: Small ribosomal subunit protein uS8 (132 aa).

It belongs to the universal ribosomal protein uS8 family. As to quaternary structure, part of the 30S ribosomal subunit. Contacts proteins S5 and S12.

One of the primary rRNA binding proteins, it binds directly to 16S rRNA central domain where it helps coordinate assembly of the platform of the 30S subunit. This Geotalea uraniireducens (strain Rf4) (Geobacter uraniireducens) protein is Small ribosomal subunit protein uS8.